The following is a 101-amino-acid chain: Small ribosomal subunit protein bS18c (101 aa).

It belongs to the bacterial ribosomal protein bS18 family. Part of the 30S ribosomal subunit.

It localises to the plastid. Its subcellular location is the chloroplast. The protein is Small ribosomal subunit protein bS18c of Citrus sinensis (Sweet orange).